An 871-amino-acid chain; its full sequence is DNA mismatch repair protein MutS (871 aa).

Glycine 620–serine 627 contacts ATP. Residues histidine 806–leucine 837 are disordered.

This sequence belongs to the DNA mismatch repair MutS family.

Its function is as follows. This protein is involved in the repair of mismatches in DNA. It is possible that it carries out the mismatch recognition step. This protein has a weak ATPase activity. This Idiomarina loihiensis (strain ATCC BAA-735 / DSM 15497 / L2-TR) protein is DNA mismatch repair protein MutS.